A 229-amino-acid chain; its full sequence is Large ribosomal subunit protein uL1 (229 aa).

The protein belongs to the universal ribosomal protein uL1 family. As to quaternary structure, part of the 50S ribosomal subunit.

Its function is as follows. Binds directly to 23S rRNA. The L1 stalk is quite mobile in the ribosome, and is involved in E site tRNA release. In terms of biological role, protein L1 is also a translational repressor protein, it controls the translation of the L11 operon by binding to its mRNA. The polypeptide is Large ribosomal subunit protein uL1 (Clostridium acetobutylicum (strain ATCC 824 / DSM 792 / JCM 1419 / IAM 19013 / LMG 5710 / NBRC 13948 / NRRL B-527 / VKM B-1787 / 2291 / W)).